Reading from the N-terminus, the 513-residue chain is Type-2 serine--tRNA ligase (513 aa).

Position 312 (Ala312) interacts with L-serine. Zn(2+) is bound at residue Cys314. Arg344 contributes to the L-serine binding site. Residues 344–346 and 355–356 each bind ATP; these read RWE and RV. Residue 361-363 participates in L-serine binding; that stretch reads RVE. Positions 363 and 467 each coordinate Zn(2+). Arg474 serves as a coordination point for ATP.

It belongs to the class-II aminoacyl-tRNA synthetase family. Type-2 seryl-tRNA synthetase subfamily. Homodimer. Zn(2+) is required as a cofactor.

Its subcellular location is the cytoplasm. The catalysed reaction is tRNA(Ser) + L-serine + ATP = L-seryl-tRNA(Ser) + AMP + diphosphate + H(+). It carries out the reaction tRNA(Sec) + L-serine + ATP = L-seryl-tRNA(Sec) + AMP + diphosphate + H(+). It functions in the pathway aminoacyl-tRNA biosynthesis; selenocysteinyl-tRNA(Sec) biosynthesis; L-seryl-tRNA(Sec) from L-serine and tRNA(Sec): step 1/1. In terms of biological role, catalyzes the attachment of serine to tRNA(Ser). Is also able to aminoacylate tRNA(Sec) with serine, to form the misacylated tRNA L-seryl-tRNA(Sec), which will be further converted into selenocysteinyl-tRNA(Sec). The sequence is that of Type-2 serine--tRNA ligase (serS) from Methanothermobacter thermautotrophicus (strain ATCC 29096 / DSM 1053 / JCM 10044 / NBRC 100330 / Delta H) (Methanobacterium thermoautotrophicum).